The primary structure comprises 148 residues: Pivalyl-CoA mutase small subunit (148 aa).

Residues 8-138 enclose the B12-binding domain; that stretch reads PLRVLVTKIG…TALGQKSRAE (131 aa). Residue His21 coordinates adenosylcob(III)alamin.

Belongs to the acyl-CoA mutase small subunit family. Monomer in the absence of the PCM large subunit. Weakly interacts with the PCM large subunit; an alpha(2)beta(2) stoichiometry seems to represent the active state of the enzyme. It depends on adenosylcob(III)alamin as a cofactor.

The enzyme catalyses 3-methylbutanoyl-CoA = 2,2-dimethylpropanoyl-CoA. Its function is as follows. Together with Xaut_5043, catalyzes the reversible isomerization between pivalyl-CoA and isovaleryl-CoA, using radical chemistry. Does not exhibit isobutyryl-CoA mutase (ICM) activity. The sequence is that of Pivalyl-CoA mutase small subunit from Xanthobacter autotrophicus (strain ATCC BAA-1158 / Py2).